Here is a 390-residue protein sequence, read N- to C-terminus: Putative transposase YncI (390 aa).

Belongs to the transposase 11 family.

This is Putative transposase YncI (yncI) from Escherichia coli O157:H7.